The following is a 398-amino-acid chain: Enolase (398 aa).

Q154 contributes to the (2R)-2-phosphoglycerate binding site. Catalysis depends on E196, which acts as the Proton donor. D232, E273, and D300 together coordinate Mg(2+). Residues K325, R354, S355, and K376 each coordinate (2R)-2-phosphoglycerate. Catalysis depends on K325, which acts as the Proton acceptor.

It belongs to the enolase family. Mg(2+) serves as cofactor.

It localises to the cytoplasm. The protein localises to the secreted. It is found in the cell surface. The enzyme catalyses (2R)-2-phosphoglycerate = phosphoenolpyruvate + H2O. It participates in carbohydrate degradation; glycolysis; pyruvate from D-glyceraldehyde 3-phosphate: step 4/5. Functionally, catalyzes the reversible conversion of 2-phosphoglycerate (2-PG) into phosphoenolpyruvate (PEP). It is essential for the degradation of carbohydrates via glycolysis. In Natronomonas pharaonis (strain ATCC 35678 / DSM 2160 / CIP 103997 / JCM 8858 / NBRC 14720 / NCIMB 2260 / Gabara) (Halobacterium pharaonis), this protein is Enolase.